A 258-amino-acid polypeptide reads, in one-letter code: Acyl-[acyl-carrier-protein]--UDP-N-acetylglucosamine O-acyltransferase (258 aa).

The protein belongs to the transferase hexapeptide repeat family. LpxA subfamily. In terms of assembly, homotrimer.

It is found in the cytoplasm. It catalyses the reaction a (3R)-hydroxyacyl-[ACP] + UDP-N-acetyl-alpha-D-glucosamine = a UDP-3-O-[(3R)-3-hydroxyacyl]-N-acetyl-alpha-D-glucosamine + holo-[ACP]. Its pathway is glycolipid biosynthesis; lipid IV(A) biosynthesis; lipid IV(A) from (3R)-3-hydroxytetradecanoyl-[acyl-carrier-protein] and UDP-N-acetyl-alpha-D-glucosamine: step 1/6. In terms of biological role, involved in the biosynthesis of lipid A, a phosphorylated glycolipid that anchors the lipopolysaccharide to the outer membrane of the cell. The protein is Acyl-[acyl-carrier-protein]--UDP-N-acetylglucosamine O-acyltransferase of Pseudomonas putida (strain W619).